The chain runs to 186 residues: MENNKKKLILLDLDNTLICAEDLDTVKDKKRLSQAQKQFRTVRMEDYYDIFERPHLQEFLDYLFKNFKVGVWTASSKDYAIFVIKNFITAPQNKVKPDRKIEIFLCSHHCNVSKKYFKGISKDLKLVTDQWKIIDLSQVKLVDDLEKLANHQPENVIHVKPFFYDEPNSKNDTELLKVQKTLETFK.

In terms of domain architecture, FCP1 homology spans 2–182; that stretch reads ENNKKKLILL…TELLKVQKTL (181 aa).

Belongs to the IIV-6 355R family.

May function as a phosphatase. This chain is Putative CTD phosphatase-like protein 355R, found in Aedes vexans (Inland floodwater mosquito).